The following is a 116-amino-acid chain: Endoribonuclease EndoA (116 aa).

It belongs to the PemK/MazF family. As to quaternary structure, homodimer. Forms a complex with antitoxin EndoAI in which the toxin activity is inhibited. One dimer binds a ssRNA substrate, forms a heterohexamer composed of alternating toxin and antitoxin homodimers which inhibits the endoribonuclease activity. Antitoxin prevents RNA binding to the endoribonuclease.

In terms of biological role, toxic component of a type II toxin-antitoxin (TA) system. Specific for 5'-UACAU-3' sequences, cleaving after the first U. Yields cleavage products with 3' phosphate and 5' hydroxyl groups. Cannot digest substrate with a UUdUACAUAA cleavage site. Overexpression is toxic for cell growth (shown in E.coli), probably by inhibiting protein synthesis through the cleavage of single-stranded RNA. The toxicity is reversed by the antitoxin EndoAI. Toxin activity cannot be inhibited by MazE from E.coli. The EndoA-EndoAI complex does not seem to bind its own promoter. This is Endoribonuclease EndoA from Bacillus subtilis (strain 168).